Reading from the N-terminus, the 252-residue chain is Ribosomal RNA small subunit methyltransferase A (252 aa).

S-adenosyl-L-methionine-binding residues include N11, L13, G38, E60, D82, and N99.

This sequence belongs to the class I-like SAM-binding methyltransferase superfamily. rRNA adenine N(6)-methyltransferase family. RsmA subfamily.

The protein localises to the cytoplasm. It catalyses the reaction adenosine(1518)/adenosine(1519) in 16S rRNA + 4 S-adenosyl-L-methionine = N(6)-dimethyladenosine(1518)/N(6)-dimethyladenosine(1519) in 16S rRNA + 4 S-adenosyl-L-homocysteine + 4 H(+). Specifically dimethylates two adjacent adenosines (A1518 and A1519) in the loop of a conserved hairpin near the 3'-end of 16S rRNA in the 30S particle. May play a critical role in biogenesis of 30S subunits. This is Ribosomal RNA small subunit methyltransferase A from Hydrogenobaculum sp. (strain Y04AAS1).